The following is a 200-amino-acid chain: NADH-quinone oxidoreductase subunit B (200 aa).

Positions 79, 80, 144, and 174 each coordinate [4Fe-4S] cluster.

Belongs to the complex I 20 kDa subunit family. As to quaternary structure, NDH-1 is composed of 14 different subunits. Subunits NuoB, C, D, E, F, and G constitute the peripheral sector of the complex. Requires [4Fe-4S] cluster as cofactor.

It localises to the cell inner membrane. It catalyses the reaction a quinone + NADH + 5 H(+)(in) = a quinol + NAD(+) + 4 H(+)(out). Its function is as follows. NDH-1 shuttles electrons from NADH, via FMN and iron-sulfur (Fe-S) centers, to quinones in the respiratory chain. The immediate electron acceptor for the enzyme in this species is believed to be ubiquinone. Couples the redox reaction to proton translocation (for every two electrons transferred, four hydrogen ions are translocated across the cytoplasmic membrane), and thus conserves the redox energy in a proton gradient. This chain is NADH-quinone oxidoreductase subunit B, found in Caulobacter vibrioides (strain NA1000 / CB15N) (Caulobacter crescentus).